A 92-amino-acid polypeptide reads, in one-letter code: Long neurotoxin 77 (92 aa).

Positions 1–21 (MKTLLLTLVVVTIVCLDLGDS) are cleaved as a signal peptide. 5 disulfides stabilise this stretch: cysteine 24–cysteine 41, cysteine 34–cysteine 62, cysteine 47–cysteine 51, cysteine 66–cysteine 77, and cysteine 78–cysteine 83.

The protein belongs to the three-finger toxin family. Long-chain subfamily. Type II alpha-neurotoxin sub-subfamily. As to expression, expressed by the venom gland.

It localises to the secreted. In terms of biological role, binds with high affinity to muscular (alpha-1/CHRNA1) and neuronal (alpha-7/CHRNA7) nicotinic acetylcholine receptor (nAChR) and inhibits acetylcholine from binding to the receptor, thereby impairing neuromuscular and neuronal transmission. This chain is Long neurotoxin 77, found in Drysdalia coronoides (White-lipped snake).